Consider the following 412-residue polypeptide: 46 kDa FK506-binding nuclear protein (412 aa).

Acidic residues-rich tracts occupy residues 95–113, 169–178, and 188–216; these read EEDL…EEEA, GEDIDTDEND, and EGDD…EEEE. The segment at 95-304 is disordered; sequence EEDLEDEEEA…PVEKKEKKQI (210 aa). Positions 247-257 are enriched in basic residues; that stretch reads KSQKRRLKKKL. Residues 271–303 show a composition bias toward basic and acidic residues; sequence DKPKKEEPQQKAEKKKPEAKKEEAPVEKKEKKQ. The region spanning 324-412 is the PPIase FKBP-type domain; it reads GKVVMVYYEG…VFEVDLKNVK (89 aa).

Belongs to the FKBP-type PPIase family. Post-translationally, phosphorylated by a nuclear kinase in the presence of Mg(2+) and ATP.

Its subcellular location is the nucleus. The enzyme catalyses [protein]-peptidylproline (omega=180) = [protein]-peptidylproline (omega=0). Inhibited by both FK506 and rapamycin. Its function is as follows. PPIases accelerate the folding of proteins. It catalyzes the cis-trans isomerization of proline imidic peptide bonds in oligopeptides. Binds double-stranded DNA in vitro. This is 46 kDa FK506-binding nuclear protein (FKBP46) from Spodoptera frugiperda (Fall armyworm).